We begin with the raw amino-acid sequence, 141 residues long: Large ribosomal subunit protein uL11 (141 aa).

It belongs to the universal ribosomal protein uL11 family. Part of the ribosomal stalk of the 50S ribosomal subunit. Interacts with L10 and the large rRNA to form the base of the stalk. L10 forms an elongated spine to which L12 dimers bind in a sequential fashion forming a multimeric L10(L12)X complex. Post-translationally, one or more lysine residues are methylated.

Forms part of the ribosomal stalk which helps the ribosome interact with GTP-bound translation factors. In Campylobacter jejuni subsp. jejuni serotype O:6 (strain 81116 / NCTC 11828), this protein is Large ribosomal subunit protein uL11.